The chain runs to 438 residues: Coenzyme A disulfide reductase (438 aa).

8-33 (GAVAGGATCASQIRRLDKESDIIIFE) provides a ligand contact to FAD. T15, Q19, R22, S39, and N42 together coordinate substrate. C43 serves as the catalytic Nucleophile. C43 functions as the Redox-active in the catalytic mechanism. K71 contacts substrate. Residue 151-166 (VLVVGAGYVSLEVLEN) participates in NADP(+) binding. 267–277 (TNVPNIYAIGD) lines the FAD pocket. Residue H299 coordinates substrate. Residue Y419 participates in FAD binding. K427 contributes to the substrate binding site.

Belongs to the class-III pyridine nucleotide-disulfide oxidoreductase family. As to quaternary structure, homodimer. FAD serves as cofactor.

It carries out the reaction NADP(+) + 2 CoA = CoA-disulfide + NADPH + H(+). Its function is as follows. Catalyzes specifically the NADPH-dependent reduction of coenzyme A disulfide. Is also active with other disulfide substrates containing at least one 4'-phosphopantethienyl moiety such as 4,4'-diphosphopantethine, but is not able to reduce oxidized glutathione, cystine, pantethine, or H(2)O(2). This Staphylococcus aureus (strain NCTC 8325 / PS 47) protein is Coenzyme A disulfide reductase (cdr).